The sequence spans 431 residues: Histidinol dehydrogenase (431 aa).

Positions 124, 187, and 210 each coordinate NAD(+). 3 residues coordinate substrate: Ser-236, Gln-258, and His-261. Zn(2+) contacts are provided by Gln-258 and His-261. Catalysis depends on proton acceptor residues Glu-325 and His-326. 4 residues coordinate substrate: His-326, Asp-359, Glu-413, and His-418. A Zn(2+)-binding site is contributed by Asp-359. His-418 lines the Zn(2+) pocket.

This sequence belongs to the histidinol dehydrogenase family. Requires Zn(2+) as cofactor.

The enzyme catalyses L-histidinol + 2 NAD(+) + H2O = L-histidine + 2 NADH + 3 H(+). The protein operates within amino-acid biosynthesis; L-histidine biosynthesis; L-histidine from 5-phospho-alpha-D-ribose 1-diphosphate: step 9/9. Functionally, catalyzes the sequential NAD-dependent oxidations of L-histidinol to L-histidinaldehyde and then to L-histidine. The protein is Histidinol dehydrogenase of Legionella pneumophila subsp. pneumophila (strain Philadelphia 1 / ATCC 33152 / DSM 7513).